The sequence spans 691 residues: Lectin-domain containing receptor kinase VI.4 (691 aa).

The first 19 residues, methionine 1 to alanine 19, serve as a signal peptide directing secretion. Residues histidine 20 to valine 306 are Extracellular-facing. The tract at residues threonine 26–alanine 273 is legume-lectin like. A helical membrane pass occupies residues isoleucine 307 to phenylalanine 327. The Cytoplasmic portion of the chain corresponds to methionine 328 to arginine 691. The 279-residue stretch at phenylalanine 363 to isoleucine 641 folds into the Protein kinase domain. Residues valine 369 to valine 377 and lysine 392 contribute to the ATP site. The active-site Proton acceptor is the aspartate 491.

The protein in the C-terminal section; belongs to the protein kinase superfamily. Ser/Thr protein kinase family. It in the N-terminal section; belongs to the leguminous lectin family.

The protein localises to the cell membrane. It carries out the reaction L-seryl-[protein] + ATP = O-phospho-L-seryl-[protein] + ADP + H(+). The enzyme catalyses L-threonyl-[protein] + ATP = O-phospho-L-threonyl-[protein] + ADP + H(+). Involved in negative regulation of abscisic acid response in seed germination. The chain is Lectin-domain containing receptor kinase VI.4 (LECRK64) from Arabidopsis thaliana (Mouse-ear cress).